Consider the following 619-residue polypeptide: Dihydroxy-acid dehydratase (619 aa).

Position 81 (Asp81) interacts with Mg(2+). [2Fe-2S] cluster is bound at residue Cys122. Positions 123 and 124 each coordinate Mg(2+). At Lys124 the chain carries N6-carboxylysine. Cys195 is a [2Fe-2S] cluster binding site. Glu494 provides a ligand contact to Mg(2+). Residue Ser520 is the Proton acceptor of the active site.

The protein belongs to the IlvD/Edd family. Homodimer. The cofactor is [2Fe-2S] cluster. Requires Mg(2+) as cofactor.

It catalyses the reaction (2R)-2,3-dihydroxy-3-methylbutanoate = 3-methyl-2-oxobutanoate + H2O. The catalysed reaction is (2R,3R)-2,3-dihydroxy-3-methylpentanoate = (S)-3-methyl-2-oxopentanoate + H2O. The protein operates within amino-acid biosynthesis; L-isoleucine biosynthesis; L-isoleucine from 2-oxobutanoate: step 3/4. Its pathway is amino-acid biosynthesis; L-valine biosynthesis; L-valine from pyruvate: step 3/4. In terms of biological role, functions in the biosynthesis of branched-chain amino acids. Catalyzes the dehydration of (2R,3R)-2,3-dihydroxy-3-methylpentanoate (2,3-dihydroxy-3-methylvalerate) into 2-oxo-3-methylpentanoate (2-oxo-3-methylvalerate) and of (2R)-2,3-dihydroxy-3-methylbutanoate (2,3-dihydroxyisovalerate) into 2-oxo-3-methylbutanoate (2-oxoisovalerate), the penultimate precursor to L-isoleucine and L-valine, respectively. The chain is Dihydroxy-acid dehydratase from Shewanella frigidimarina (strain NCIMB 400).